Reading from the N-terminus, the 715-residue chain is Interferon-induced GTP-binding protein Mx2 (715 aa).

Positions 1-14 (MSKAHKSWPHRRRN) are enriched in basic residues. 2 disordered regions span residues 1-24 (MSKA…SLKK) and 69-88 (NNQP…PENN). Residues 69–80 (NNQPLPGNTSQP) show a composition bias toward polar residues. Residues 115–387 (DLALPAIAVI…LITHIQKSLP (273 aa)) enclose the Dynamin-type G domain. The interval 125–132 (GDQSSGKS) is G1 motif. Position 125-132 (125-132 (GDQSSGKS)) interacts with GTP. Positions 150–152 (VTR) are G2 motif. Positions 225–228 (DLPG) are G3 motif. GTP-binding positions include 225–229 (DLPGI) and 294–297 (TKPD). The interval 294 to 297 (TKPD) is G4 motif. The segment at 326–329 (KCRG) is G5 motif. The GED domain maps to 623–714 (FNEIGVHLNA…ALCQFSSKEI (92 aa)).

It belongs to the TRAFAC class dynamin-like GTPase superfamily. Dynamin/Fzo/YdjA family.

It is found in the cytoplasm. It localises to the nucleus. In terms of biological role, interferon-induced dynamin-like GTPase with antiviral activity. The chain is Interferon-induced GTP-binding protein Mx2 (MX2) from Macaca mulatta (Rhesus macaque).